The following is a 267-amino-acid chain: Type III pantothenate kinase (267 aa).

Residue 6–13 coordinates ATP; that stretch reads DSGNSRLK. Substrate is bound by residues Y96 and 103 to 106; that span reads GADR. D105 acts as the Proton acceptor in catalysis. Residue T131 coordinates ATP. Residue T181 participates in substrate binding.

This sequence belongs to the type III pantothenate kinase family. Homodimer. The cofactor is NH4(+). It depends on K(+) as a cofactor.

It localises to the cytoplasm. It carries out the reaction (R)-pantothenate + ATP = (R)-4'-phosphopantothenate + ADP + H(+). Its pathway is cofactor biosynthesis; coenzyme A biosynthesis; CoA from (R)-pantothenate: step 1/5. Its function is as follows. Catalyzes the phosphorylation of pantothenate (Pan), the first step in CoA biosynthesis. The protein is Type III pantothenate kinase of Bordetella bronchiseptica (strain ATCC BAA-588 / NCTC 13252 / RB50) (Alcaligenes bronchisepticus).